Consider the following 152-residue polypeptide: 1,4-dihydroxy-2-naphthoyl-CoA hydrolase (152 aa).

The active site involves D20.

It belongs to the 4-hydroxybenzoyl-CoA thioesterase family. DHNA-CoA hydrolase subfamily.

The enzyme catalyses 1,4-dihydroxy-2-naphthoyl-CoA + H2O = 1,4-dihydroxy-2-naphthoate + CoA + H(+). The protein operates within cofactor biosynthesis; phylloquinone biosynthesis. It functions in the pathway quinol/quinone metabolism; 1,4-dihydroxy-2-naphthoate biosynthesis; 1,4-dihydroxy-2-naphthoate from chorismate: step 7/7. Its function is as follows. Catalyzes the hydrolysis of 1,4-dihydroxy-2-naphthoyl-CoA (DHNA-CoA) to 1,4-dihydroxy-2-naphthoate (DHNA), a reaction involved in phylloquinone (vitamin K1) biosynthesis. This is 1,4-dihydroxy-2-naphthoyl-CoA hydrolase from Synechococcus sp. (strain CC9311).